Consider the following 1077-residue polypeptide: ATP-dependent DNA helicase MPH1 (1077 aa).

The Helicase ATP-binding domain occupies 99 to 266 (IVHRALFENV…EVVDNLQISK (168 aa)). 112-119 (IPTGMGKT) is a binding site for ATP. Positions 214-217 (DEAH) match the DEAH box motif. A Helicase C-terminal domain is found at 511-660 (KKVDRIRRLE…SLNYKVTDRI (150 aa)). Disordered regions lie at residues 536-556 (EKLA…ISGM) and 831-859 (TLSS…PKRQ). Positions 831–841 (TLSSDNKSTPD) are enriched in polar residues.

This sequence belongs to the DEAD box helicase family. DEAH subfamily. FANCM sub-subfamily. As to quaternary structure, interacts with the MHF histone-fold complex to form the FANCM-MHF complex.

The protein resides in the nucleus. It carries out the reaction ATP + H2O = ADP + phosphate + H(+). Its function is as follows. ATP-dependent DNA helicase involved in DNA damage repair by homologous recombination and in genome maintenance. Capable of unwinding D-loops. Plays a role in limiting crossover recombinants during mitotic DNA double-strand break (DSB) repair. Component of a FANCM-MHF complex which promotes gene conversion at blocked replication forks, probably by reversal of the stalled fork. The sequence is that of ATP-dependent DNA helicase MPH1 from Eremothecium gossypii (strain ATCC 10895 / CBS 109.51 / FGSC 9923 / NRRL Y-1056) (Yeast).